The sequence spans 599 residues: Cartilage intermediate layer protein 1 (599 aa).

N-linked (GlcNAc...) asparagine glycosylation is found at Asn47, Asn416, and Asn472. The span at 550–560 (QSTSARPSPAS) shows a compositional bias: polar residues. The tract at residues 550-599 (QSTSARPSPASTVRGRAPSRRQRASSGSQRQPRGVASLRFPGVAQQPLSN) is disordered. Residues 573-583 (ASSGSQRQPRG) show a composition bias toward low complexity.

In terms of assembly, monomer. Interacts with TGFB1. Post-translationally, cleaved into 2 chains possibly by a furin-like protease upon or preceding secretion. As to expression, specifically expressed in cartilage. Expressed at lower level in young cartilage than in adult cartilage. In adult cartilage, it is highly expressed throughout middeep zones.

It is found in the secreted. Its subcellular location is the extracellular space. It localises to the extracellular matrix. Probably plays a role in cartilage scaffolding. May act by antagonizing TGF-beta1 (TGFB1) and IGF1 functions. Has the ability to suppress IGF1-induced proliferation and sulfated proteoglycan synthesis, and inhibits ligand-induced IGF1R autophosphorylation. May inhibit TGFB1-mediated induction of cartilage matrix genes via its interaction with TGFB1. Overexpression may lead to impair chondrocyte growth and matrix repair and indirectly promote inorganic pyrophosphate (PPi) supersaturation in aging and osteoarthritis cartilage. The protein is Cartilage intermediate layer protein 1 (CILP) of Sus scrofa (Pig).